The following is a 144-amino-acid chain: D-aminoacyl-tRNA deacylase (144 aa).

The Gly-cisPro motif, important for rejection of L-amino acids motif lies at 136-137 (GP).

Belongs to the DTD family. Homodimer.

It localises to the cytoplasm. It carries out the reaction glycyl-tRNA(Ala) + H2O = tRNA(Ala) + glycine + H(+). The enzyme catalyses a D-aminoacyl-tRNA + H2O = a tRNA + a D-alpha-amino acid + H(+). An aminoacyl-tRNA editing enzyme that deacylates mischarged D-aminoacyl-tRNAs. Also deacylates mischarged glycyl-tRNA(Ala), protecting cells against glycine mischarging by AlaRS. Acts via tRNA-based rather than protein-based catalysis; rejects L-amino acids rather than detecting D-amino acids in the active site. By recycling D-aminoacyl-tRNA to D-amino acids and free tRNA molecules, this enzyme counteracts the toxicity associated with the formation of D-aminoacyl-tRNA entities in vivo and helps enforce protein L-homochirality. The sequence is that of D-aminoacyl-tRNA deacylase from Actinobacillus succinogenes (strain ATCC 55618 / DSM 22257 / CCUG 43843 / 130Z).